The primary structure comprises 517 residues: Quinol oxidase subunit 1 (517 aa).

Helical transmembrane passes span 19 to 39 (VVWL…IAAM), 64 to 84 (IHGW…VIGF), 98 to 118 (QMAI…AGSP), 150 to 170 (MAYL…VTLI), 185 to 205 (IFAA…PALA), 226 to 246 (WAIL…FPLF), 271 to 291 (IYLL…TWPL), 303 to 323 (TLIL…TIFT), 333 to 353 (VGMG…QALV), 369 to 389 (VVGH…TTVF), 412 to 432 (IGMI…SVAG), and 460 to 480 (IGIP…LAYA). Residue His65 participates in Fe(II)-heme a binding. The Cu cation site is built by His235, Tyr239, His284, and His285. Positions 235-239 (HPVVY) form a cross-link, 1'-histidyl-3'-tyrosine (His-Tyr). His372 is a binding site for heme a3. His374 serves as a coordination point for Fe(II)-heme a.

This sequence belongs to the heme-copper respiratory oxidase family.

It is found in the cell membrane. The enzyme catalyses 2 a quinol + O2 = 2 a quinone + 2 H2O. In terms of biological role, catalyzes the reduction of oxygen to water. Functionally, subunits I, II and III form the functional core of the enzyme complex. Electrons originating in caldariella quinol are transferred to the binuclear center formed by heme A3 and Cu(B). Subunit I binds heme a and the bimetallic center. The polypeptide is Quinol oxidase subunit 1 (soxB) (Sulfolobus acidocaldarius (strain ATCC 33909 / DSM 639 / JCM 8929 / NBRC 15157 / NCIMB 11770)).